The chain runs to 142 residues: Large ribosomal subunit protein uL13 (142 aa).

This sequence belongs to the universal ribosomal protein uL13 family. Part of the 50S ribosomal subunit.

This protein is one of the early assembly proteins of the 50S ribosomal subunit, although it is not seen to bind rRNA by itself. It is important during the early stages of 50S assembly. The polypeptide is Large ribosomal subunit protein uL13 (Burkholderia pseudomallei (strain 1106a)).